A 665-amino-acid chain; its full sequence is Kinesin-like protein KIF22 (665 aa).

The Kinesin motor domain maps to 43–368 (RVRVAVRLRP…LNFAARSKEV (326 aa)). Residue 127-134 (GPTGAGKT) coordinates ATP. A disordered region spans residues 379 to 428 (QPHALGPVKLSQKELLGPPEAKRARGPEEEEIGSPEPMAAPASASQKLSP). Phosphoserine occurs at positions 412, 427, and 452. Residues 412-428 (SPEPMAAPASASQKLSP) show a composition bias toward low complexity. Residue Lys-465 forms a Glycyl lysine isopeptide (Lys-Gly) (interchain with G-Cter in SUMO2) linkage. Residues 465–508 (KRERMVLMKTVEEKDLEIERLKTKQKELEAKMLAQKAEEKENHC) are a coiled coil. Phosphoserine occurs at positions 543, 562, and 581.

The protein belongs to the TRAFAC class myosin-kinesin ATPase superfamily. Kinesin family. In terms of assembly, interacts with FAM83D. Interacts with SIAH1. In terms of processing, ubiquitinated; mediated by SIAH1 and leading to its subsequent proteasomal degradation. As to expression, expressed in bone, cartilage, joint capsule, ligament, skin, and primary cultured chondrocytes.

It is found in the nucleus. The protein resides in the cytoplasm. Its subcellular location is the cytoskeleton. In terms of biological role, kinesin family member that is involved in spindle formation and the movements of chromosomes during mitosis and meiosis. Binds to microtubules and to DNA. Plays a role in congression of laterally attached chromosomes in NDC80-depleted cells. This chain is Kinesin-like protein KIF22 (KIF22), found in Homo sapiens (Human).